Here is a 41-residue protein sequence, read N- to C-terminus: Large ribosomal subunit protein bL36 (41 aa).

The protein belongs to the bacterial ribosomal protein bL36 family.

The polypeptide is Large ribosomal subunit protein bL36 (Methylorubrum extorquens (strain CM4 / NCIMB 13688) (Methylobacterium extorquens)).